The primary structure comprises 361 residues: Peptide chain release factor 1 (361 aa).

Q236 is modified (N5-methylglutamine).

This sequence belongs to the prokaryotic/mitochondrial release factor family. Methylated by PrmC. Methylation increases the termination efficiency of RF1.

The protein localises to the cytoplasm. In terms of biological role, peptide chain release factor 1 directs the termination of translation in response to the peptide chain termination codons UAG and UAA. The sequence is that of Peptide chain release factor 1 from Levilactobacillus brevis (strain ATCC 367 / BCRC 12310 / CIP 105137 / JCM 1170 / LMG 11437 / NCIMB 947 / NCTC 947) (Lactobacillus brevis).